The primary structure comprises 678 residues: Zinc finger translocation-associated protein (678 aa).

4 disordered regions span residues 1–100, 182–250, 329–417, and 490–583; these read MEPG…PGRD, LGVQ…GSRG, QPEA…HRRH, and LGPP…NYQP. The segment covering 62-78 has biased composition (low complexity); it reads SAPLPSSRARGPASSGR. The segment covering 79–88 has biased composition (basic and acidic residues); sequence KYSDHCEARA. The span at 187–201 shows a compositional bias: acidic residues; sequence AEEEEEEEEEEEEEG. A Glycyl lysine isopeptide (Lys-Gly) (interchain with G-Cter in SUMO2) cross-link involves residue Lys375. A compositionally biased stretch (acidic residues) spans 388 to 398; it reads AEEEEELEEGE. The segment covering 492-504 has biased composition (pro residues); that stretch reads PPRPESPQGPIPP. Composition is skewed to acidic residues over residues 513–529 and 543–553; these read GGGD…EEWG and AEEEEDEEDGQ. Pro residues predominate over residues 560-572; the sequence is LPPPPPPPPPPPP. Residues 573–583 are compositionally biased toward basic and acidic residues; that stretch reads RSREQRRNYQP.

This is Zinc finger translocation-associated protein from Homo sapiens (Human).